A 791-amino-acid chain; its full sequence is Sphingomyelin phosphodiesterase 4 (791 aa).

The chain crosses the membrane as a helical span at residues 755-775 (LFALLSFGLFSSTGLILIISF).

Mg(2+) serves as cofactor.

It is found in the endoplasmic reticulum membrane. The protein localises to the golgi apparatus membrane. The protein resides in the nucleus envelope. It localises to the cell membrane. Its subcellular location is the sarcolemma. It carries out the reaction a sphingomyelin + H2O = phosphocholine + an N-acylsphing-4-enine + H(+). In terms of biological role, catalyzes the hydrolysis of membrane sphingomyelin to form phosphorylcholine and ceramide. It has a relevant role in the homeostasis of membrane sphingolipids, thereby influencing membrane integrity, and endoplasmic reticulum organization and function. May sensitize cells to DNA damage-induced apoptosis. This chain is Sphingomyelin phosphodiesterase 4 (smpd4), found in Danio rerio (Zebrafish).